Here is a 340-residue protein sequence, read N- to C-terminus: Dihydroorotate dehydrogenase (quinone) (340 aa).

Residues 65-69 (AGLDK) and Thr89 contribute to the FMN site. Lys69 provides a ligand contact to substrate. Substrate is bound at residue 114–118 (NRMGF). FMN is bound by residues Asn142 and Asn175. Residue Asn175 participates in substrate binding. Ser178 acts as the Nucleophile in catalysis. A substrate-binding site is contributed by Asn180. 2 residues coordinate FMN: Lys220 and Thr248. 249–250 (NT) is a substrate binding site. FMN contacts are provided by residues Gly271, Gly300, and 321–322 (YT).

It belongs to the dihydroorotate dehydrogenase family. Type 2 subfamily. In terms of assembly, monomer. It depends on FMN as a cofactor.

It is found in the cell membrane. It carries out the reaction (S)-dihydroorotate + a quinone = orotate + a quinol. It participates in pyrimidine metabolism; UMP biosynthesis via de novo pathway; orotate from (S)-dihydroorotate (quinone route): step 1/1. Catalyzes the conversion of dihydroorotate to orotate with quinone as electron acceptor. This is Dihydroorotate dehydrogenase (quinone) from Paraburkholderia xenovorans (strain LB400).